Here is a 264-residue protein sequence, read N- to C-terminus: Thymidylate synthase 2 (264 aa).

Arg21 contributes to the dUMP binding site. His51 is a binding site for (6R)-5,10-methylene-5,6,7,8-tetrahydrofolate. 126-127 (RR) is a dUMP binding site. Cys146 (nucleophile) is an active-site residue. Residues 166 to 169 (RSAD), Asn177, and 207 to 209 (HIY) each bind dUMP. Asp169 is a (6R)-5,10-methylene-5,6,7,8-tetrahydrofolate binding site. Ser263 is a (6R)-5,10-methylene-5,6,7,8-tetrahydrofolate binding site.

The protein belongs to the thymidylate synthase family. Bacterial-type ThyA subfamily. Homodimer.

The protein localises to the cytoplasm. The enzyme catalyses dUMP + (6R)-5,10-methylene-5,6,7,8-tetrahydrofolate = 7,8-dihydrofolate + dTMP. It functions in the pathway pyrimidine metabolism; dTTP biosynthesis. Catalyzes the reductive methylation of 2'-deoxyuridine-5'-monophosphate (dUMP) to 2'-deoxythymidine-5'-monophosphate (dTMP) while utilizing 5,10-methylenetetrahydrofolate (mTHF) as the methyl donor and reductant in the reaction, yielding dihydrofolate (DHF) as a by-product. This enzymatic reaction provides an intracellular de novo source of dTMP, an essential precursor for DNA biosynthesis. The chain is Thymidylate synthase 2 from Bacillus spizizenii (strain ATCC 23059 / NRRL B-14472 / W23) (Bacillus subtilis subsp. spizizenii).